The following is a 319-amino-acid chain: Acetyl-coenzyme A carboxylase carboxyl transferase subunit alpha (319 aa).

Residues 32-293 form the CoA carboxyltransferase C-terminal domain; that stretch reads NVDIEVRALE…KAVLLNELEA (262 aa).

It belongs to the AccA family. In terms of assembly, acetyl-CoA carboxylase is a heterohexamer composed of biotin carboxyl carrier protein (AccB), biotin carboxylase (AccC) and two subunits each of ACCase subunit alpha (AccA) and ACCase subunit beta (AccD).

The protein localises to the cytoplasm. The catalysed reaction is N(6)-carboxybiotinyl-L-lysyl-[protein] + acetyl-CoA = N(6)-biotinyl-L-lysyl-[protein] + malonyl-CoA. It participates in lipid metabolism; malonyl-CoA biosynthesis; malonyl-CoA from acetyl-CoA: step 1/1. Component of the acetyl coenzyme A carboxylase (ACC) complex. First, biotin carboxylase catalyzes the carboxylation of biotin on its carrier protein (BCCP) and then the CO(2) group is transferred by the carboxyltransferase to acetyl-CoA to form malonyl-CoA. In Xylella fastidiosa (strain Temecula1 / ATCC 700964), this protein is Acetyl-coenzyme A carboxylase carboxyl transferase subunit alpha.